The chain runs to 328 residues: tRNA dimethylallyltransferase (328 aa).

25–32 (GNTGSGKS) contacts ATP. 27 to 32 (TGSGKS) lines the substrate pocket. The interval 50–53 (DSRQ) is interaction with substrate tRNA.

This sequence belongs to the IPP transferase family. Monomer. Mg(2+) is required as a cofactor.

The enzyme catalyses adenosine(37) in tRNA + dimethylallyl diphosphate = N(6)-dimethylallyladenosine(37) in tRNA + diphosphate. In terms of biological role, catalyzes the transfer of a dimethylallyl group onto the adenine at position 37 in tRNAs that read codons beginning with uridine, leading to the formation of N6-(dimethylallyl)adenosine (i(6)A). This is tRNA dimethylallyltransferase from Dehalococcoides mccartyi (strain ATCC BAA-2100 / JCM 16839 / KCTC 5957 / BAV1).